Reading from the N-terminus, the 371-residue chain is MEEAGAAVVTAGEAELNWSRLSVSTETLESELEARGEERRGAREALLRLLLPHNRLVSLPRALGSGFPHLQLLDVSGNALTALGPELLALRGLRTLLAKNNRLGGPSALPKGLAQSPLCRSLQVLNLSGNCFQEVPASLLELRALQTLSLGGNQLQSIPAEIENLQSLECLYLGGNFIKEIPPELGNLPSLNYLVLCDNKIQSIPPQLSQLHSLRSLSLHNNLLTYLPREILNLIHLEELSLRGNPLVVRFVRDLTYDPPTLLELAARTIKIRNISYTPYDLPGNLLRYLGSASNCPNPKCGGVYFDCCVRQIKFVDFCGKYRLPLMHYLCSPECSSPCSSASHSSTSQSESDSEDEASVAARRMQKVLLG.

S24 is modified (phosphoserine). 9 LRR repeats span residues 45 to 66 (ALLR…LGSG), 69 to 91 (HLQL…LALR), 92 to 113 (GLRT…PKGL), 121 to 143 (SLQV…LELR), 144 to 166 (ALQT…ENLQ), 167 to 189 (SLEC…GNLP), 190 to 211 (SLNY…LSQL), 213 to 234 (SLRS…ILNL), and 236 to 256 (HLEE…RDLT). Residues 340–351 (SSASHSSTSQSE) are compositionally biased toward low complexity. The disordered stretch occupies residues 340-361 (SSASHSSTSQSESDSEDEASVA).

The polypeptide is Leucine-rich repeat-containing protein 58 (LRRC58) (Homo sapiens (Human)).